The primary structure comprises 318 residues: tRNA-cytidine(32) 2-sulfurtransferase (318 aa).

Positions 52–57 match the PP-loop motif motif; it reads SGGKDS. The [4Fe-4S] cluster site is built by cysteine 127, cysteine 130, and cysteine 218.

The protein belongs to the TtcA family. Homodimer. The cofactor is Mg(2+). Requires [4Fe-4S] cluster as cofactor.

Its subcellular location is the cytoplasm. It catalyses the reaction cytidine(32) in tRNA + S-sulfanyl-L-cysteinyl-[cysteine desulfurase] + AH2 + ATP = 2-thiocytidine(32) in tRNA + L-cysteinyl-[cysteine desulfurase] + A + AMP + diphosphate + H(+). The protein operates within tRNA modification. Catalyzes the ATP-dependent 2-thiolation of cytidine in position 32 of tRNA, to form 2-thiocytidine (s(2)C32). The sulfur atoms are provided by the cysteine/cysteine desulfurase (IscS) system. This is tRNA-cytidine(32) 2-sulfurtransferase from Actinobacillus pleuropneumoniae serotype 3 (strain JL03).